Reading from the N-terminus, the 342-residue chain is Anthranilate phosphoribosyltransferase (342 aa).

5-phospho-alpha-D-ribose 1-diphosphate is bound by residues Gly81, 84-85 (GD), Thr89, 91-94 (NVST), 109-117 (KHGNRAASS), and Ala121. Gly81 serves as a coordination point for anthranilate. Ser93 contacts Mg(2+). Position 112 (Asn112) interacts with anthranilate. Arg167 contacts anthranilate. Asp226 and Glu227 together coordinate Mg(2+).

The protein belongs to the anthranilate phosphoribosyltransferase family. As to quaternary structure, homodimer. Mg(2+) serves as cofactor.

It carries out the reaction N-(5-phospho-beta-D-ribosyl)anthranilate + diphosphate = 5-phospho-alpha-D-ribose 1-diphosphate + anthranilate. The protein operates within amino-acid biosynthesis; L-tryptophan biosynthesis; L-tryptophan from chorismate: step 2/5. Functionally, catalyzes the transfer of the phosphoribosyl group of 5-phosphorylribose-1-pyrophosphate (PRPP) to anthranilate to yield N-(5'-phosphoribosyl)-anthranilate (PRA). The polypeptide is Anthranilate phosphoribosyltransferase (Beijerinckia indica subsp. indica (strain ATCC 9039 / DSM 1715 / NCIMB 8712)).